We begin with the raw amino-acid sequence, 394 residues long: Phosphoglycerate kinase (394 aa).

Substrate is bound by residues Asp-21–Asn-23, Arg-37, His-60–Arg-63, Arg-115, and Arg-148. ATP contacts are provided by residues Lys-199, Glu-321, and Gly-347–Thr-350.

Belongs to the phosphoglycerate kinase family. In terms of assembly, monomer.

Its subcellular location is the cytoplasm. The catalysed reaction is (2R)-3-phosphoglycerate + ATP = (2R)-3-phospho-glyceroyl phosphate + ADP. It functions in the pathway carbohydrate degradation; glycolysis; pyruvate from D-glyceraldehyde 3-phosphate: step 2/5. The chain is Phosphoglycerate kinase from Aromatoleum aromaticum (strain DSM 19018 / LMG 30748 / EbN1) (Azoarcus sp. (strain EbN1)).